The following is a 645-amino-acid chain: Zinc finger and SCAN domain-containing protein 2 (645 aa).

3 disordered regions span residues 1 to 25 (MMAAEIPRVTTPLSPLVQVPQEEDR), 37 to 75 (DDSWVQEAVLQEDGPESEPFPQSAGKGSPQEEVTRGPQG), and 193 to 230 (EMPEGESAQHSDGESDFERDAGIQRPQGHTPGKDHGEV). In terms of domain architecture, SCAN box spans 59 to 132 (SAGKGSPQEE…ALVEDLTQTL (74 aa)). A compositionally biased stretch (basic and acidic residues) spans 199 to 214 (SAQHSDGESDFERDAG). 14 consecutive C2H2-type zinc fingers follow at residues 253–275 (YECPQCGKTFSRKSHLITHERTH), 281–303 (YKCDECGKSFSDGSNFSRHQTTH), 309–331 (YKCRDCGKSFSRSANLITHQRIH), 337–359 (FQCAECGKSFSRSPNLIAHQRTH), 365–387 (YSCPECGKSFGNRSSLNTHQGIH), 393–415 (YECKECGESFSYNSNLIRHQRIH), 421–443 (YKCTDCGQRFSQSSALITHRRTH), 449–471 (YQCSECGKNFSRSSNLATHRRTH), 477–499 (YKCGVCGKSFSQSSSLIAHQGMH), 505–527 (YECLTCGESFSWSSNLLKHQRIH), 533–555 (YKCSECGKCFSQRSQLVVHQQTH), 561–583 (YKCLMCGKSFSRGSILVMHQRAH), 589–611 (YRCPECGKGFSWNSVLIIHQRIH), and 617–639 (YKCPECGKGFSNSSNFITHQRTH).

This sequence belongs to the krueppel C2H2-type zinc-finger protein family.

Its subcellular location is the nucleus. In terms of biological role, may be involved in transcriptional regulation during the post-meiotic stages of spermatogenesis. The polypeptide is Zinc finger and SCAN domain-containing protein 2 (ZSCAN2) (Pongo abelii (Sumatran orangutan)).